Consider the following 217-residue polypeptide: MWLIVGLGNPGDTYARTRHNIGFRVVSELAQRHRLEFTHKRAHARIAEGIIAGQRVALALPQTYMNLSGQAVVGLRQWYKIDPATELLVVYDDVDLPFGVLRLRERGSAGTHNGMRSIITLLGSQVFPRLRIGIDRPPPAWDLADYVLGRFTPEQEAQLPDIMQKAADALETVVREGMAVAMNRINAPPPKPKREQKRSSDAPDSSSDTNTSNASDG.

TRNA is bound at residue Tyr14. Catalysis depends on His19, which acts as the Proton acceptor. TRNA-binding residues include Tyr64, Asn66, and Asn113. The disordered stretch occupies residues 182 to 217 (MNRINAPPPKPKREQKRSSDAPDSSSDTNTSNASDG). The segment covering 202–217 (APDSSSDTNTSNASDG) has biased composition (low complexity).

The protein belongs to the PTH family. As to quaternary structure, monomer.

The protein localises to the cytoplasm. The catalysed reaction is an N-acyl-L-alpha-aminoacyl-tRNA + H2O = an N-acyl-L-amino acid + a tRNA + H(+). Its function is as follows. Hydrolyzes ribosome-free peptidyl-tRNAs (with 1 or more amino acids incorporated), which drop off the ribosome during protein synthesis, or as a result of ribosome stalling. Functionally, catalyzes the release of premature peptidyl moieties from peptidyl-tRNA molecules trapped in stalled 50S ribosomal subunits, and thus maintains levels of free tRNAs and 50S ribosomes. This Roseiflexus sp. (strain RS-1) protein is Peptidyl-tRNA hydrolase.